A 772-amino-acid chain; its full sequence is NAD(P)H-quinone oxidoreductase subunit 5, chloroplastic (772 aa).

16 helical membrane-spanning segments follow: residues Trp9–Phe29, Trp40–Ile60, Ile89–Phe109, Phe125–Ile145, Ile147–Thr167, Gly185–Phe205, Asn220–Ala240, Thr259–Ala279, Tyr290–Ala312, Leu328–Ile348, Ala355–Ser375, Thr397–Ser417, Trp426–Tyr446, Leu550–Phe570, Phe604–Phe624, and Ile731–Leu751.

It belongs to the complex I subunit 5 family. NDH is composed of at least 16 different subunits, 5 of which are encoded in the nucleus.

It is found in the plastid. Its subcellular location is the chloroplast thylakoid membrane. The catalysed reaction is a plastoquinone + NADH + (n+1) H(+)(in) = a plastoquinol + NAD(+) + n H(+)(out). It carries out the reaction a plastoquinone + NADPH + (n+1) H(+)(in) = a plastoquinol + NADP(+) + n H(+)(out). Functionally, NDH shuttles electrons from NAD(P)H:plastoquinone, via FMN and iron-sulfur (Fe-S) centers, to quinones in the photosynthetic chain and possibly in a chloroplast respiratory chain. The immediate electron acceptor for the enzyme in this species is believed to be plastoquinone. Couples the redox reaction to proton translocation, and thus conserves the redox energy in a proton gradient. The sequence is that of NAD(P)H-quinone oxidoreductase subunit 5, chloroplastic (ndhF) from Oenothera argillicola (Appalachian evening primrose).